A 122-amino-acid chain; its full sequence is Large ribosomal subunit protein uL14 (122 aa).

Belongs to the universal ribosomal protein uL14 family. Part of the 50S ribosomal subunit. Forms a cluster with proteins L3 and L19. In the 70S ribosome, L14 and L19 interact and together make contacts with the 16S rRNA in bridges B5 and B8.

Functionally, binds to 23S rRNA. Forms part of two intersubunit bridges in the 70S ribosome. The protein is Large ribosomal subunit protein uL14 of Methylorubrum populi (strain ATCC BAA-705 / NCIMB 13946 / BJ001) (Methylobacterium populi).